We begin with the raw amino-acid sequence, 338 residues long: Ketol-acid reductoisomerase (NADP(+)) (338 aa).

The region spanning M1–T181 is the KARI N-terminal Rossmann domain. NADP(+) contacts are provided by residues F24–Q27, R47, S50, S52, and D82–Q85. H107 is an active-site residue. G133 is an NADP(+) binding site. One can recognise a KARI C-terminal knotted domain in the interval T182–I327. Residues D190, E194, E226, and E230 each coordinate Mg(2+). Residue S251 participates in substrate binding.

Belongs to the ketol-acid reductoisomerase family. Requires Mg(2+) as cofactor.

It catalyses the reaction (2R)-2,3-dihydroxy-3-methylbutanoate + NADP(+) = (2S)-2-acetolactate + NADPH + H(+). The enzyme catalyses (2R,3R)-2,3-dihydroxy-3-methylpentanoate + NADP(+) = (S)-2-ethyl-2-hydroxy-3-oxobutanoate + NADPH + H(+). Its pathway is amino-acid biosynthesis; L-isoleucine biosynthesis; L-isoleucine from 2-oxobutanoate: step 2/4. It functions in the pathway amino-acid biosynthesis; L-valine biosynthesis; L-valine from pyruvate: step 2/4. Involved in the biosynthesis of branched-chain amino acids (BCAA). Catalyzes an alkyl-migration followed by a ketol-acid reduction of (S)-2-acetolactate (S2AL) to yield (R)-2,3-dihydroxy-isovalerate. In the isomerase reaction, S2AL is rearranged via a Mg-dependent methyl migration to produce 3-hydroxy-3-methyl-2-ketobutyrate (HMKB). In the reductase reaction, this 2-ketoacid undergoes a metal-dependent reduction by NADPH to yield (R)-2,3-dihydroxy-isovalerate. This Hydrogenovibrio crunogenus (strain DSM 25203 / XCL-2) (Thiomicrospira crunogena) protein is Ketol-acid reductoisomerase (NADP(+)).